A 310-amino-acid polypeptide reads, in one-letter code: Transaldolase (310 aa).

Lysine 124 acts as the Schiff-base intermediate with substrate in catalysis.

Belongs to the transaldolase family. Type 1 subfamily. As to quaternary structure, homodimer.

The protein localises to the cytoplasm. It catalyses the reaction D-sedoheptulose 7-phosphate + D-glyceraldehyde 3-phosphate = D-erythrose 4-phosphate + beta-D-fructose 6-phosphate. Its pathway is carbohydrate degradation; pentose phosphate pathway; D-glyceraldehyde 3-phosphate and beta-D-fructose 6-phosphate from D-ribose 5-phosphate and D-xylulose 5-phosphate (non-oxidative stage): step 2/3. Its function is as follows. Transaldolase is important for the balance of metabolites in the pentose-phosphate pathway. The polypeptide is Transaldolase (Teredinibacter turnerae (strain ATCC 39867 / T7901)).